A 346-amino-acid chain; its full sequence is Phosphate acyltransferase (346 aa).

This sequence belongs to the PlsX family. As to quaternary structure, homodimer. Probably interacts with PlsY.

The protein localises to the cytoplasm. It catalyses the reaction a fatty acyl-[ACP] + phosphate = an acyl phosphate + holo-[ACP]. It functions in the pathway lipid metabolism; phospholipid metabolism. Its function is as follows. Catalyzes the reversible formation of acyl-phosphate (acyl-PO(4)) from acyl-[acyl-carrier-protein] (acyl-ACP). This enzyme utilizes acyl-ACP as fatty acyl donor, but not acyl-CoA. The protein is Phosphate acyltransferase of Brucella ovis (strain ATCC 25840 / 63/290 / NCTC 10512).